A 793-amino-acid chain; its full sequence is Serine/threonine-protein kinase CLA4 (793 aa).

A disordered region spans residues 8–27 (RELSESDFQDIGPAPKPPPV). The PH domain occupies 56-168 (QRKKSGWVSY…WLDSIFSKCP (113 aa)). The region spanning 173–186 (VSSPTNFTHKVHVG) is the CRIB domain. Disordered stretches follow at residues 243–369 (AAAQ…ESPT) and 383–476 (QKQL…RPTM). 3 stretches are compositionally biased toward polar residues: residues 258–276 (TLSS…STPP), 312–337 (GVTT…QSGP), and 355–369 (LGNS…ESPT). The 279-residue stretch at 498–776 (FQMIEKAGQG…TEELLHHSFF (279 aa)) folds into the Protein kinase domain. ATP is bound by residues 504 to 512 (AGQGASGSV) and Lys545. Asp644 serves as the catalytic Proton acceptor.

Belongs to the protein kinase superfamily. STE Ser/Thr protein kinase family. STE20 subfamily.

It carries out the reaction L-seryl-[protein] + ATP = O-phospho-L-seryl-[protein] + ADP + H(+). The enzyme catalyses L-threonyl-[protein] + ATP = O-phospho-L-threonyl-[protein] + ADP + H(+). Functionally, required for hyphal maturation and for septation. This Eremothecium gossypii (strain ATCC 10895 / CBS 109.51 / FGSC 9923 / NRRL Y-1056) (Yeast) protein is Serine/threonine-protein kinase CLA4 (CLA4).